Here is a 76-residue protein sequence, read N- to C-terminus: Putative snRNP Sm-like protein (76 aa).

The region spanning 4 to 76 is the Sm domain; the sequence is RPLDVIHKSL…VLALSPVELE (73 aa).

It belongs to the snRNP Sm proteins family.

The sequence is that of Putative snRNP Sm-like protein from Thermococcus kodakarensis (strain ATCC BAA-918 / JCM 12380 / KOD1) (Pyrococcus kodakaraensis (strain KOD1)).